The following is a 158-amino-acid chain: N5-carboxyaminoimidazole ribonucleotide mutase (158 aa).

The substrate site is built by Ser-10, Asp-13, and Arg-40.

It belongs to the AIR carboxylase family. Class I subfamily.

The enzyme catalyses 5-carboxyamino-1-(5-phospho-D-ribosyl)imidazole + H(+) = 5-amino-1-(5-phospho-D-ribosyl)imidazole-4-carboxylate. It participates in purine metabolism; IMP biosynthesis via de novo pathway; 5-amino-1-(5-phospho-D-ribosyl)imidazole-4-carboxylate from 5-amino-1-(5-phospho-D-ribosyl)imidazole (N5-CAIR route): step 2/2. In terms of biological role, catalyzes the conversion of N5-carboxyaminoimidazole ribonucleotide (N5-CAIR) to 4-carboxy-5-aminoimidazole ribonucleotide (CAIR). The protein is N5-carboxyaminoimidazole ribonucleotide mutase of Saccharolobus solfataricus (strain ATCC 35092 / DSM 1617 / JCM 11322 / P2) (Sulfolobus solfataricus).